The primary structure comprises 642 residues: Dihydrolipoyllysine-residue acetyltransferase component of pyruvate dehydrogenase complex, mitochondrial (642 aa).

A mitochondrion-targeting transit peptide spans 1-85; sequence MWRVCARRAR…LLGSPSRRSY (85 aa). Positions 80–99 are disordered; it reads PSRRSYSLPPHQKVPLPSLS. 2 consecutive Lipoyl-binding domains span residues 90–166 and 217–293; these read HQKV…CITV and HMQI…CIIV. Ser-99 is modified (phosphoserine). 2 positions are modified to N6-lipoyllysine: Lys-131 and Lys-258. The segment at 313–346 is disordered; that stretch reads LKPQAAPPAPPPVAAVPPTPQPVAPTPSAAPAGP. Residues 317–337 show a composition bias toward pro residues; sequence AAPPAPPPVAAVPPTPQPVAP. The 38-residue stretch at 351-388 folds into the Peripheral subunit-binding (PSBD) domain; sequence FVSPLAKKLAAEKGIDLTQVKGTGPEGRIIKKDIDSFV. CoA is bound at residue Arg-456. Residue Lys-461 is modified to N6-acetyllysine. Lys-468 is modified (N6-succinyllysine). Ser-470 lines the CoA pocket. Lys-542 is modified (N6-succinyllysine). Positions 561, 562, and 586 each coordinate CoA. Residues His-615 and Asp-619 contribute to the active site.

Belongs to the 2-oxoacid dehydrogenase family. As to quaternary structure, part of the pyruvate dehydrogenase complex (PDHc) that is a multi-enzyme complex composed of multiple copies of three enzymes, pyruvate dehydrogenase (subunits PDH1A and PDHB, E1 component), dihydrolipoamide acetyltransferase (DLAT, E2 component), and dihydrolipoamide dehydrogenase (DLD, E3 component) to which is added an additional protein the E3-binding protein (PDHX, E3BP). In terms of structural architecture, the E2 and E3BP components assemble into a 60meric central core with icosahedral symmetry. The central core is decorated with E1 and E3 proteins. Currently, two alternative models for the E2:E3BP stoichiometry are considered as being either 48:12 (E2(48)-E3BP(12)) or 40:20 (E2(40)-E3BP(20)). Interacts with PDK2 and PDK3. Interacts with SIRT4. Interacts with PDHB. It depends on (R)-lipoate as a cofactor. In terms of processing, delipoylated at Lys-131 and Lys-258 by SIRT4, delipoylation decreases the PHD complex activity.

It localises to the mitochondrion matrix. The catalysed reaction is N(6)-[(R)-dihydrolipoyl]-L-lysyl-[protein] + acetyl-CoA = N(6)-[(R)-S(8)-acetyldihydrolipoyl]-L-lysyl-[protein] + CoA. As part of the pyruvate dehydrogenase complex, catalyzes the transfers of an acetyl group to a lipoic acid moiety. The pyruvate dehydrogenase complex, catalyzes the overall conversion of pyruvate to acetyl-CoA and CO(2), and thereby links cytoplasmic glycolysis and the mitochondrial tricarboxylic acid (TCA) cycle. This is Dihydrolipoyllysine-residue acetyltransferase component of pyruvate dehydrogenase complex, mitochondrial from Mus musculus (Mouse).